Reading from the N-terminus, the 207-residue chain is LexA repressor (207 aa).

Positions 28-48 form a DNA-binding region, H-T-H motif; that stretch reads RAEIARELGFRSANAAEEHLK. Residues Ser124 and Lys161 each act as for autocatalytic cleavage activity in the active site.

The protein belongs to the peptidase S24 family. In terms of assembly, homodimer.

It carries out the reaction Hydrolysis of Ala-|-Gly bond in repressor LexA.. Its function is as follows. Represses a number of genes involved in the response to DNA damage (SOS response), including recA and lexA. In the presence of single-stranded DNA, RecA interacts with LexA causing an autocatalytic cleavage which disrupts the DNA-binding part of LexA, leading to derepression of the SOS regulon and eventually DNA repair. The protein is LexA repressor of Aliivibrio salmonicida (strain LFI1238) (Vibrio salmonicida (strain LFI1238)).